A 627-amino-acid polypeptide reads, in one-letter code: DNA-directed RNA polymerase subunit gamma (627 aa).

Residues C70, C72, C85, and C88 each contribute to the Zn(2+) site. Positions 468, 470, and 472 each coordinate Mg(2+).

The protein belongs to the RNA polymerase beta' chain family. RpoC1 subfamily. In cyanobacteria the RNAP catalytic core is composed of 2 alpha, 1 beta, 1 beta', 1 gamma and 1 omega subunit. When a sigma factor is associated with the core the holoenzyme is formed, which can initiate transcription. It depends on Mg(2+) as a cofactor. Zn(2+) serves as cofactor.

The catalysed reaction is RNA(n) + a ribonucleoside 5'-triphosphate = RNA(n+1) + diphosphate. Its function is as follows. DNA-dependent RNA polymerase catalyzes the transcription of DNA into RNA using the four ribonucleoside triphosphates as substrates. This is DNA-directed RNA polymerase subunit gamma from Synechococcus sp. (strain JA-3-3Ab) (Cyanobacteria bacterium Yellowstone A-Prime).